The primary structure comprises 146 residues: Large ribosomal subunit protein uL15 (146 aa).

A disordered region spans residues Met1–Thr39.

It belongs to the universal ribosomal protein uL15 family. As to quaternary structure, part of the 50S ribosomal subunit.

Its function is as follows. Binds to the 23S rRNA. The protein is Large ribosomal subunit protein uL15 of Nocardioides sp. (strain ATCC BAA-499 / JS614).